Reading from the N-terminus, the 156-residue chain is Small ribosomal subunit protein uS7 (156 aa).

It belongs to the universal ribosomal protein uS7 family. Part of the 30S ribosomal subunit. Contacts proteins S9 and S11.

One of the primary rRNA binding proteins, it binds directly to 16S rRNA where it nucleates assembly of the head domain of the 30S subunit. Is located at the subunit interface close to the decoding center, probably blocks exit of the E-site tRNA. The polypeptide is Small ribosomal subunit protein uS7 (Corynebacterium jeikeium (strain K411)).